The primary structure comprises 677 residues: WD repeat-containing protein 43 (677 aa).

WD repeat units follow at residues 11–51, 57–119, 124–163, 166–205, 207–259, and 267–309; these read PLAP…LHQE, HLSG…LHSK, GHDN…VKCK, GDNS…RHFT, HATP…KEKS, and TDEP…YCKK. S77 is subject to Phosphoserine. Residue K309 forms a Glycyl lysine isopeptide (Lys-Gly) (interchain with G-Cter in SUMO1); alternate linkage. K309 participates in a covalent cross-link: Glycyl lysine isopeptide (Lys-Gly) (interchain with G-Cter in SUMO2); alternate. Residue T321 is modified to Phosphothreonine. K384 is covalently cross-linked (Glycyl lysine isopeptide (Lys-Gly) (interchain with G-Cter in SUMO1); alternate). A Glycyl lysine isopeptide (Lys-Gly) (interchain with G-Cter in SUMO2); alternate cross-link involves residue K384. T394 is modified (phosphothreonine). S399, S431, S437, and S590 each carry phosphoserine. Disordered stretches follow at residues 414–445 and 582–677; these read AIKP…LGAM and SEKT…SEEE. Positions 582–592 are enriched in polar residues; it reads SEKTKGATSPG. Over residues 600–652 the composition is skewed to acidic residues; the sequence is EEESSEEESDDEIADKDSEDNWDEDEEESESEKDEDVEEEDEDAEGKDEENGE. Positions 653-663 are enriched in basic and acidic residues; sequence DRDTASEKELN. Position 656 is a phosphothreonine (T656). A Phosphoserine modification is found at S658. The segment covering 664-677 has biased composition (acidic residues); that stretch reads GDSDLDPENESEEE.

Belongs to the UTP5 family. In terms of assembly, part of the small subunit (SSU) processome, composed of more than 70 proteins and the RNA chaperone small nucleolar RNA (snoRNA) U3. May be a component of the proposed t-UTP subcomplex of the ribosomal small subunit (SSU) processome containing at least UTP4, WDR43, HEATR1, UTP15, WDR75. Binds to RNA; binding is required for its chromatin association. Interacts with CDK9, DDX21 and SUPT6H. Interacts with RNA polymerase II. Interacts directly with UTP4 and UTP15.

The protein localises to the nucleus. Its subcellular location is the nucleolus. The protein resides in the nucleolus fibrillar center. It localises to the nucleoplasm. Ribosome biogenesis factor that coordinates hyperactive transcription and ribogenesis. Part of the small subunit (SSU) processome, first precursor of the small eukaryotic ribosomal subunit. During the assembly of the SSU processome in the nucleolus, many ribosome biogenesis factors, an RNA chaperone and ribosomal proteins associate with the nascent pre-rRNA and work in concert to generate RNA folding, modifications, rearrangements and cleavage as well as targeted degradation of pre-ribosomal RNA by the RNA exosome. Involved in nucleolar processing of pre-18S ribosomal RNA. Required for optimal pre-ribosomal RNA transcription by RNA polymerase I. Essential for stem cell pluripotency and embryonic development. In the nucleoplasm, recruited by promoter-associated/nascent transcripts and transcription to active promoters where it facilitates releases of elongation factor P-TEFb and paused RNA polymerase II to allow transcription elongation and maintain high-level expression of its targets genes. The chain is WD repeat-containing protein 43 from Homo sapiens (Human).